A 220-amino-acid chain; its full sequence is 1-Cys peroxiredoxin A (220 aa).

Positions 4–165 (LTIGDTVPNL…VVRAVDALQT (162 aa)) constitute a Thioredoxin domain. C46 acts as the Cysteine sulfenic acid (-SOH) intermediate in catalysis. Positions 195–218 (KEKFPQGFDTADLPSGKGYLRFTK) match the Bipartite nuclear localization signal motif.

This sequence belongs to the peroxiredoxin family. Prx6 subfamily.

Its subcellular location is the nucleus. The protein localises to the cytoplasm. The enzyme catalyses a hydroperoxide + [thioredoxin]-dithiol = an alcohol + [thioredoxin]-disulfide + H2O. Functionally, thiol-specific peroxidase that catalyzes the reduction of hydrogen peroxide and organic hydroperoxides to water and alcohols, respectively. Seems to contribute to the inhibition of germination during stress. In Oryza sativa subsp. japonica (Rice), this protein is 1-Cys peroxiredoxin A.